The sequence spans 2298 residues: Protein Ycf2 (2298 aa).

1638–1645 (GSIGTGRS) contributes to the ATP binding site.

This sequence belongs to the Ycf2 family.

The protein resides in the plastid. It is found in the chloroplast stroma. Its function is as follows. Probable ATPase of unknown function. Its presence in a non-photosynthetic plant (Epifagus virginiana) and experiments in tobacco indicate that it has an essential function which is probably not related to photosynthesis. This is Protein Ycf2 from Gossypium barbadense (Sea Island cotton).